Here is a 446-residue protein sequence, read N- to C-terminus: Tubulin beta chain (446 aa).

Residues glutamine 11, glutamate 69, serine 138, glycine 142, threonine 143, glycine 144, asparagine 204, and asparagine 226 each coordinate GTP. Glutamate 69 contacts Mg(2+). The tract at residues 423-446 is disordered; sequence QQYQDAGVDEEEEEYEEEPLPEDE. Residues 429–446 are compositionally biased toward acidic residues; sequence GVDEEEEEYEEEPLPEDE.

Belongs to the tubulin family. Dimer of alpha and beta chains. A typical microtubule is a hollow water-filled tube with an outer diameter of 25 nm and an inner diameter of 15 nM. Alpha-beta heterodimers associate head-to-tail to form protofilaments running lengthwise along the microtubule wall with the beta-tubulin subunit facing the microtubule plus end conferring a structural polarity. Microtubules usually have 13 protofilaments but different protofilament numbers can be found in some organisms and specialized cells. Mg(2+) serves as cofactor.

The protein localises to the cytoplasm. It is found in the cytoskeleton. Functionally, tubulin is the major constituent of microtubules, a cylinder consisting of laterally associated linear protofilaments composed of alpha- and beta-tubulin heterodimers. Microtubules grow by the addition of GTP-tubulin dimers to the microtubule end, where a stabilizing cap forms. Below the cap, tubulin dimers are in GDP-bound state, owing to GTPase activity of alpha-tubulin. This is Tubulin beta chain (TUBB) from Pestalotiopsis microspora.